Here is a 270-residue protein sequence, read N- to C-terminus: uncharacterized protein (270 aa).

30-55 is a binding site for NADP(+); the sequence is ATGSLGRVAARALADAGARLTLAGGN. Ser157 is a substrate binding site. Tyr171 acts as the Proton acceptor in catalysis.

This sequence belongs to the short-chain dehydrogenases/reductases (SDR) family.

This is an uncharacterized protein from Mycobacterium tuberculosis (strain CDC 1551 / Oshkosh).